The chain runs to 462 residues: Fez family zinc finger protein 1 (462 aa).

The short motif at 34–49 is the Engrailed homology 1 repressor element; it reads PLAFSIERIMSRTPEP. C2H2-type zinc fingers lie at residues 260–282, 288–310, 316–338, 344–366, 372–394, and 400–423; these read FTCEVCGKVFNAHYNLTRHMPVH, FVCKICGKGFRQASTLCRHKIIH, HKCNQCGKAFNRSSTLNTHTRIH, FVCEFCGKGFHQKGNYKNHKLTH, FKCNICNKAFHQIYNLTFHMHTH, and FTCPTCGKGFCRNFDLKKHVRKLH. Positions 441–462 are disordered; the sequence is LLLPNREPSPTIQSPQLQKSGY. Residues 448-462 are compositionally biased toward polar residues; that stretch reads PSPTIQSPQLQKSGY.

It belongs to the krueppel C2H2-type zinc-finger protein family.

It is found in the nucleus. Transcription repressor. Involved in the development of the forebrain region. This is Fez family zinc finger protein 1 (fezf1) from Xenopus tropicalis (Western clawed frog).